The sequence spans 301 residues: Putative two-component membrane permease complex subunit SMU_747c (301 aa).

A run of 8 helical transmembrane segments spans residues 15 to 35 (LAIF…GAIL), 60 to 80 (ILFG…IVPI), 97 to 117 (FLAT…SAFG), 124 to 144 (FLRL…LGFI), 188 to 208 (YLIF…TRIL), 211 to 231 (IGHN…ILSL), 238 to 258 (FIGT…FLLI), and 278 to 298 (FILQ…LIVG).

It belongs to the UPF0718 family. Interacts with SMU_746c.

Its subcellular location is the cell membrane. Could be part of a two-component membrane permease system responsible for amino acid transport under low pH. Involved in acidogenesis, biofilm formation and low-pH survival. The protein is Putative two-component membrane permease complex subunit SMU_747c of Streptococcus mutans serotype c (strain ATCC 700610 / UA159).